A 484-amino-acid chain; its full sequence is UDP-N-acetylmuramoyl-L-alanyl-D-glutamate--2,6-diaminopimelate ligase (484 aa).

An ATP-binding site is contributed by glycine 110–threonine 116. UDP-N-acetyl-alpha-D-muramoyl-L-alanyl-D-glutamate-binding positions include threonine 152–threonine 153, serine 179, and arginine 187. Lysine 219 is subject to N6-carboxylysine. Meso-2,6-diaminopimelate-binding positions include arginine 381, aspartate 405–arginine 408, glycine 455, and glutamate 459. The Meso-diaminopimelate recognition motif motif lies at aspartate 405–arginine 408.

This sequence belongs to the MurCDEF family. MurE subfamily. It depends on Mg(2+) as a cofactor. In terms of processing, carboxylation is probably crucial for Mg(2+) binding and, consequently, for the gamma-phosphate positioning of ATP.

The protein localises to the cytoplasm. It catalyses the reaction UDP-N-acetyl-alpha-D-muramoyl-L-alanyl-D-glutamate + meso-2,6-diaminopimelate + ATP = UDP-N-acetyl-alpha-D-muramoyl-L-alanyl-gamma-D-glutamyl-meso-2,6-diaminopimelate + ADP + phosphate + H(+). It functions in the pathway cell wall biogenesis; peptidoglycan biosynthesis. Its function is as follows. Catalyzes the addition of meso-diaminopimelic acid to the nucleotide precursor UDP-N-acetylmuramoyl-L-alanyl-D-glutamate (UMAG) in the biosynthesis of bacterial cell-wall peptidoglycan. The protein is UDP-N-acetylmuramoyl-L-alanyl-D-glutamate--2,6-diaminopimelate ligase of Clostridium perfringens (strain 13 / Type A).